Reading from the N-terminus, the 822-residue chain is Nucleolar complex protein 3 (822 aa).

Disordered regions lie at residues 1–86, 106–142, and 172–199; these read MGTK…DGDD, ANKR…KEQD, and KPKQ…EDSD. A compositionally biased stretch (basic residues) spans 13–23; sequence RAAHLKSKKTP. The span at 35-45 shows a compositional bias: basic and acidic residues; sequence KRDQLKSKREQ. The short motif at 41 to 48 is the Nuclear localization signal element; sequence SKREQGQN. The segment covering 76-86 has biased composition (acidic residues); it reads PLEEDNEDGDD. Positions 116 to 126 are enriched in polar residues; it reads TGENDPDQGQS. Positions 181-199 are enriched in acidic residues; that stretch reads EEEEDDSEEDGDTEYEDSD. Residue Ser-187 is modified to Phosphoserine. Thr-193 is subject to Phosphothreonine. A Phosphoserine modification is found at Ser-198. Residues 445–509 adopt a coiled-coil conformation; that stretch reads KIKNVNLDAE…NKQAKHQKLT (65 aa).

This sequence belongs to the CBF/MAK21 family.

It localises to the nucleus. The protein resides in the nucleolus. This chain is Nucleolar complex protein 3, found in Drosophila melanogaster (Fruit fly).